A 224-amino-acid chain; its full sequence is Precorrin-2 dehydrogenase (224 aa).

NAD(+) is bound by residues Ser26 to Val27 and Glu47 to Gln50.

The protein belongs to the precorrin-2 dehydrogenase / sirohydrochlorin ferrochelatase family. In terms of assembly, homodimer.

It catalyses the reaction precorrin-2 + NAD(+) = sirohydrochlorin + NADH + 2 H(+). Its pathway is porphyrin-containing compound metabolism; siroheme biosynthesis; sirohydrochlorin from precorrin-2: step 1/1. Functionally, involved in the archaeal biosynthesis of heme. Catalyzes the oxiation of precorrin-2 into sirohydroclorin. In Methanosarcina barkeri (strain Fusaro / DSM 804), this protein is Precorrin-2 dehydrogenase.